The sequence spans 307 residues: GTPase Era (307 aa).

In terms of domain architecture, Era-type G spans 17–186; sequence RCGFVAIVGR…LELIKPYLPE (170 aa). The segment at 25–32 is G1; that stretch reads GRPNVGKS. A GTP-binding site is contributed by 25-32; it reads GRPNVGKS. The segment at 51-55 is G2; that stretch reads QTTRN. The tract at residues 72–75 is G3; the sequence is DTPG. GTP contacts are provided by residues 72-76 and 133-136; these read DTPGF and NKID. The G4 stretch occupies residues 133–136; that stretch reads NKID. The G5 stretch occupies residues 165–167; sequence VSA. The region spanning 217-293 is the KH type-2 domain; sequence LGEELPYAMN…FLKVWVKVKS (77 aa).

The protein belongs to the TRAFAC class TrmE-Era-EngA-EngB-Septin-like GTPase superfamily. Era GTPase family. As to quaternary structure, monomer.

It is found in the cytoplasm. It localises to the cell inner membrane. Functionally, an essential GTPase that binds both GDP and GTP, with rapid nucleotide exchange. Plays a role in 16S rRNA processing and 30S ribosomal subunit biogenesis and possibly also in cell cycle regulation and energy metabolism. In Neisseria meningitidis serogroup A / serotype 4A (strain DSM 15465 / Z2491), this protein is GTPase Era.